Consider the following 288-residue polypeptide: Bifunctional protein FolD (288 aa).

Residues 165 to 167, serine 190, and isoleucine 231 contribute to the NADP(+) site; that span reads GRS.

This sequence belongs to the tetrahydrofolate dehydrogenase/cyclohydrolase family. In terms of assembly, homodimer.

The enzyme catalyses (6R)-5,10-methylene-5,6,7,8-tetrahydrofolate + NADP(+) = (6R)-5,10-methenyltetrahydrofolate + NADPH. It carries out the reaction (6R)-5,10-methenyltetrahydrofolate + H2O = (6R)-10-formyltetrahydrofolate + H(+). It participates in one-carbon metabolism; tetrahydrofolate interconversion. Catalyzes the oxidation of 5,10-methylenetetrahydrofolate to 5,10-methenyltetrahydrofolate and then the hydrolysis of 5,10-methenyltetrahydrofolate to 10-formyltetrahydrofolate. This Nitrosospira multiformis (strain ATCC 25196 / NCIMB 11849 / C 71) protein is Bifunctional protein FolD.